A 78-amino-acid polypeptide reads, in one-letter code: UPF0335 protein RPR_04100 (78 aa).

This sequence belongs to the UPF0335 family.

In Rickettsia peacockii (strain Rustic), this protein is UPF0335 protein RPR_04100.